The sequence spans 514 residues: Prolyl 3,4-dihydroxylase OGFOD1 (514 aa).

The Fe2OG dioxygenase domain occupies 114-221 (GAVDCSCNIY…RVSISGWFHT (108 aa)). 2 residues coordinate Fe cation: H132 and D134. Position 146 (Y146) interacts with 2-oxoglutarate. H200 serves as a coordination point for Fe cation. R212 is a binding site for 2-oxoglutarate.

The protein belongs to the TPA1 family. Monomer and homodimer. It depends on Fe(2+) as a cofactor. L-ascorbate serves as cofactor.

The catalysed reaction is [ribosomal protein uS12]-L-proline + 2-oxoglutarate + O2 = [ribosomal protein uS12]-(3S)-3-hydroxy-L-proline + succinate + CO2. The enzyme catalyses [ribosomal protein uS12]-(3S)-3-hydroxy-L-proline + 2-oxoglutarate + O2 = [ribosomal protein uS12]-(3S)-3,4-dihydroxy-L-proline + succinate + CO2. Its function is as follows. Prolyl 3,4-dihydroxylase that catalyzes 3,4-dihydroxylation of 'Pro-61' of small ribosomal subunit uS12 (RPS23), thereby regulating protein translation termination efficiency. The protein is Prolyl 3,4-dihydroxylase OGFOD1 (Ogd) of Ostreococcus tauri.